The sequence spans 561 residues: Putative transport protein Ent638_1362 (561 aa).

The next 5 helical transmembrane spans lie at 8-28, 32-52, 66-86, 94-114, and 158-178; these read LLNGNYILLLFVVLALGLCLG, LGSVQLGNSIGVLVVSLLLGQ, FMLFIFCVGVEAGPNFFSIFF, MLALVMVGSALIIALGLGKLF, and HLSLGYALTYLIGLVSLIVAA. 2 RCK C-terminal domains span residues 202 to 288 and 292 to 373; these read LDTD…SFRN and VFDR…RIGF. Transmembrane regions (helical) follow at residues 383–403, 406–426, 447–467, 475–495, and 540–560; these read LLAFCAFFIVGLMIGMITFQF, FSFGVGNAAGLLFAGIMLGFL, FGLMVFMAGVGLSAGSGIGHS, MLVAGLIVSLLPVVICFLFGA, and AIANVLLTLAGTLIIIIWPGL.

It belongs to the AAE transporter (TC 2.A.81) family. YbjL subfamily.

Its subcellular location is the cell membrane. This is Putative transport protein Ent638_1362 from Enterobacter sp. (strain 638).